Consider the following 279-residue polypeptide: uncharacterized protein (279 aa).

Positions Met1–Lys77 constitute an HTH rpiR-type domain. Residues Ile37–Lys56 constitute a DNA-binding region (H-T-H motif). An SIS domain is found at Cys123–Ser263.

This is an uncharacterized protein from Clostridium perfringens (strain 13 / Type A).